The sequence spans 590 residues: UvrABC system protein C (590 aa).

The 78-residue stretch at 14–91 (DQPGCYLMKD…IKKYDPKYNV (78 aa)) folds into the GIY-YIG domain. The 36-residue stretch at 196 to 231 (QQIKKELTEKMQEAAEQLEFERAKELRDQIAYIDST) folds into the UVR domain.

The protein belongs to the UvrC family. Interacts with UvrB in an incision complex.

Its subcellular location is the cytoplasm. Functionally, the UvrABC repair system catalyzes the recognition and processing of DNA lesions. UvrC both incises the 5' and 3' sides of the lesion. The N-terminal half is responsible for the 3' incision and the C-terminal half is responsible for the 5' incision. The protein is UvrABC system protein C of Bacillus pumilus (strain SAFR-032).